Consider the following 95-residue polypeptide: Large ribosomal subunit protein uL23 (95 aa).

Belongs to the universal ribosomal protein uL23 family. Part of the 50S ribosomal subunit. Contacts protein L29, and trigger factor when it is bound to the ribosome.

One of the early assembly proteins it binds 23S rRNA. One of the proteins that surrounds the polypeptide exit tunnel on the outside of the ribosome. Forms the main docking site for trigger factor binding to the ribosome. This is Large ribosomal subunit protein uL23 from Syntrophotalea carbinolica (strain DSM 2380 / NBRC 103641 / GraBd1) (Pelobacter carbinolicus).